The primary structure comprises 173 residues: Crossover junction endodeoxyribonuclease RuvC (173 aa).

Catalysis depends on residues aspartate 8, glutamate 67, and aspartate 139. Mg(2+)-binding residues include aspartate 8, glutamate 67, and aspartate 139.

The protein belongs to the RuvC family. In terms of assembly, homodimer which binds Holliday junction (HJ) DNA. The HJ becomes 2-fold symmetrical on binding to RuvC with unstacked arms; it has a different conformation from HJ DNA in complex with RuvA. In the full resolvosome a probable DNA-RuvA(4)-RuvB(12)-RuvC(2) complex forms which resolves the HJ. The cofactor is Mg(2+).

Its subcellular location is the cytoplasm. The catalysed reaction is Endonucleolytic cleavage at a junction such as a reciprocal single-stranded crossover between two homologous DNA duplexes (Holliday junction).. Functionally, the RuvA-RuvB-RuvC complex processes Holliday junction (HJ) DNA during genetic recombination and DNA repair. Endonuclease that resolves HJ intermediates. Cleaves cruciform DNA by making single-stranded nicks across the HJ at symmetrical positions within the homologous arms, yielding a 5'-phosphate and a 3'-hydroxyl group; requires a central core of homology in the junction. The consensus cleavage sequence is 5'-(A/T)TT(C/G)-3'. Cleavage occurs on the 3'-side of the TT dinucleotide at the point of strand exchange. HJ branch migration catalyzed by RuvA-RuvB allows RuvC to scan DNA until it finds its consensus sequence, where it cleaves and resolves the cruciform DNA. The sequence is that of Crossover junction endodeoxyribonuclease RuvC from Psychromonas ingrahamii (strain DSM 17664 / CCUG 51855 / 37).